The chain runs to 218 residues: Octanoyltransferase (218 aa).

The BPL/LPL catalytic domain occupies 31 to 206 (EETPDEVWLV…ELVNLLGYEQ (176 aa)). Substrate-binding positions include 70–77 (RGGQVTYH), 137–139 (SLG), and 150–152 (GLA). Catalysis depends on cysteine 168, which acts as the Acyl-thioester intermediate.

Belongs to the LipB family.

The protein resides in the cytoplasm. It carries out the reaction octanoyl-[ACP] + L-lysyl-[protein] = N(6)-octanoyl-L-lysyl-[protein] + holo-[ACP] + H(+). It participates in protein modification; protein lipoylation via endogenous pathway; protein N(6)-(lipoyl)lysine from octanoyl-[acyl-carrier-protein]: step 1/2. Catalyzes the transfer of endogenously produced octanoic acid from octanoyl-acyl-carrier-protein onto the lipoyl domains of lipoate-dependent enzymes. Lipoyl-ACP can also act as a substrate although octanoyl-ACP is likely to be the physiological substrate. This is Octanoyltransferase from Vibrio vulnificus (strain YJ016).